The following is a 52-amino-acid chain: ATP synthase protein 8 (52 aa).

A helical transmembrane segment spans residues 6 to 26 (PINGFVILCSISLMLLTLLIN).

Belongs to the ATPase protein 8 family. As to quaternary structure, F-type ATPases have 2 components, CF(1) - the catalytic core - and CF(0) - the membrane proton channel.

It is found in the mitochondrion membrane. Its function is as follows. Mitochondrial membrane ATP synthase (F(1)F(0) ATP synthase or Complex V) produces ATP from ADP in the presence of a proton gradient across the membrane which is generated by electron transport complexes of the respiratory chain. F-type ATPases consist of two structural domains, F(1) - containing the extramembraneous catalytic core and F(0) - containing the membrane proton channel, linked together by a central stalk and a peripheral stalk. During catalysis, ATP synthesis in the catalytic domain of F(1) is coupled via a rotary mechanism of the central stalk subunits to proton translocation. Part of the complex F(0) domain. Minor subunit located with subunit a in the membrane. The protein is ATP synthase protein 8 (MT-ATP8) of Albinaria turrita (Door snail).